Reading from the N-terminus, the 316-residue chain is NADH-quinone oxidoreductase subunit H (316 aa).

A run of 8 helical transmembrane segments spans residues 6 to 26 (PAVVIGILLSTVIVAAWLIWV), 74 to 94 (FVIAPAIVMVTMLLGFVVVPF), 98 to 118 (VGVIDFNFGLLYFFALSSLAV), 145 to 165 (ISYEVFMGLAAMGVVMLAGSF), 177 to 197 (GWYVLPQFAGFLAFLVAAVAE), 233 to 253 (YLGITLNSAILVTLFFGGWLG), 256 to 276 (FLPPLAWFILKTLVFILFFIL), and 296 to 316 (VMLPLTLANIVVTGAVGLSVP).

Belongs to the complex I subunit 1 family. As to quaternary structure, NDH-1 is composed of 14 different subunits. Subunits NuoA, H, J, K, L, M, N constitute the membrane sector of the complex.

The protein localises to the cell inner membrane. The enzyme catalyses a quinone + NADH + 5 H(+)(in) = a quinol + NAD(+) + 4 H(+)(out). Functionally, NDH-1 shuttles electrons from NADH, via FMN and iron-sulfur (Fe-S) centers, to quinones in the respiratory chain. The immediate electron acceptor for the enzyme in this species is believed to be ubiquinone. Couples the redox reaction to proton translocation (for every two electrons transferred, four hydrogen ions are translocated across the cytoplasmic membrane), and thus conserves the redox energy in a proton gradient. This subunit may bind ubiquinone. This chain is NADH-quinone oxidoreductase subunit H, found in Methylococcus capsulatus (strain ATCC 33009 / NCIMB 11132 / Bath).